The following is a 626-amino-acid chain: Protein ALEX (626 aa).

Disordered stretches follow at residues 1–29 (MMAR…LEPM), 173–223 (TTAH…AAHP), 236–473 (AAPG…APRS), and 556–612 (AASV…NNSR). 2 stretches are compositionally biased toward polar residues: residues 186 to 195 (KSTAAASSRQ) and 255 to 270 (GSTT…QSRL). The span at 281–312 (QIRESEQRDPQLRRKQQRWKEPLMPRREEKYP) shows a compositional bias: basic and acidic residues. The segment covering 337–346 (QPILTPGQPQ) has biased composition (low complexity). Residues 366–399 (IPTPGQPLPPQPIPTPGRPLTPQPIPTPGRPLTP) are compositionally biased toward pro residues. Over residues 416–435 (RLLRPGQPMSPQLRQTQGLP) the composition is skewed to low complexity. Over residues 436 to 445 (LPQPLLPPGQ) the composition is skewed to pro residues. Positions 570–579 (ALSRSRRYPW) are enriched in basic residues. The segment covering 600–611 (RRNAVSSSTNNS) has biased composition (polar residues).

It belongs to the ALEX family. In terms of assembly, interacts with the N-terminal region of the XLas isoforms of guanine nucleotide-binding protein G(s) subunit alpha.

The protein localises to the cell membrane. The protein resides in the cell projection. Its subcellular location is the ruffle. Its function is as follows. May inhibit the adenylyl cyclase-stimulating activity of guanine nucleotide-binding protein G(s) subunit alpha which is produced from the same locus in a different open reading frame. The polypeptide is Protein ALEX (Homo sapiens (Human)).